Here is a 734-residue protein sequence, read N- to C-terminus: Photosystem I P700 chlorophyll a apoprotein A2 (734 aa).

Helical transmembrane passes span 46–69 (IFAS…FHVA), 135–158 (LYFG…LHLQ), 175–199 (LNHH…HVAI), 273–291 (IAHH…GHMY), 330–353 (LHMQ…QHMY), 369–395 (AALY…IFFV), 417–439 (AIIS…LYIH), and 517–535 (FLVH…LILV). Residues Cys-559 and Cys-568 each contribute to the [4Fe-4S] cluster site. 2 helical membrane-spanning segments follow: residues 575–596 (AFYL…YWHW) and 643–665 (QAVW…MFLI). Chlorophyll a is bound by residues His-654, Met-662, and Tyr-670. A phylloquinone-binding site is contributed by Trp-671. Residues 707-727 (LVGLAHFTVGFIFTFAPFVIA) traverse the membrane as a helical segment.

Belongs to the PsaA/PsaB family. The PsaA/B heterodimer binds the P700 chlorophyll special pair and subsequent electron acceptors. PSI consists of a core antenna complex that captures photons, and an electron transfer chain that converts photonic excitation into a charge separation. The eukaryotic PSI reaction center is composed of at least 11 subunits. P700 is a chlorophyll a/chlorophyll a' dimer, A0 is one or more chlorophyll a, A1 is one or both phylloquinones and FX is a shared 4Fe-4S iron-sulfur center. serves as cofactor.

Its subcellular location is the plastid. It is found in the chloroplast thylakoid membrane. The enzyme catalyses reduced [plastocyanin] + hnu + oxidized [2Fe-2S]-[ferredoxin] = oxidized [plastocyanin] + reduced [2Fe-2S]-[ferredoxin]. PsaA and PsaB bind P700, the primary electron donor of photosystem I (PSI), as well as the electron acceptors A0, A1 and FX. PSI is a plastocyanin/cytochrome c6-ferredoxin oxidoreductase, converting photonic excitation into a charge separation, which transfers an electron from the donor P700 chlorophyll pair to the spectroscopically characterized acceptors A0, A1, FX, FA and FB in turn. Oxidized P700 is reduced on the lumenal side of the thylakoid membrane by plastocyanin or cytochrome c6. This is Photosystem I P700 chlorophyll a apoprotein A2 from Emiliania huxleyi (Coccolithophore).